A 473-amino-acid chain; its full sequence is 3-isopropylmalate dehydratase large subunit (473 aa).

Residues C354, C414, and C417 each contribute to the [4Fe-4S] cluster site.

Belongs to the aconitase/IPM isomerase family. LeuC type 1 subfamily. In terms of assembly, heterodimer of LeuC and LeuD. The cofactor is [4Fe-4S] cluster.

The catalysed reaction is (2R,3S)-3-isopropylmalate = (2S)-2-isopropylmalate. Its pathway is amino-acid biosynthesis; L-leucine biosynthesis; L-leucine from 3-methyl-2-oxobutanoate: step 2/4. In terms of biological role, catalyzes the isomerization between 2-isopropylmalate and 3-isopropylmalate, via the formation of 2-isopropylmaleate. The protein is 3-isopropylmalate dehydratase large subunit of Rhodopseudomonas palustris (strain BisB18).